The primary structure comprises 370 residues: Glucan endo-1,3-beta-glucosidase, basic vacuolar isoform GLB (370 aa).

Positions 1–32 (MSTSDKHNTPQMAAITLLGLLLVASTIEIAGA) are cleaved as a signal peptide. Residue Q33 is modified to Pyrrolidone carboxylic acid. Catalysis depends on E128, which acts as the Proton donor. Residue E273 is the Nucleophile of the active site. Residues 349-370 (VSGGVWDSSVETNATASLISEM) constitute a propeptide, removed in mature form. N-linked (GlcNAc...) asparagine glycosylation is present at N361.

It belongs to the glycosyl hydrolase 17 family. Is expressed primarily in epidermal cell of healthy plant, and following induction by ethylene, accumulates in mesophyll cells.

The protein resides in the vacuole. It carries out the reaction Hydrolysis of (1-&gt;3)-beta-D-glucosidic linkages in (1-&gt;3)-beta-D-glucans.. Implicated in the defense of plants against pathogens. In Nicotiana tabacum (Common tobacco), this protein is Glucan endo-1,3-beta-glucosidase, basic vacuolar isoform GLB.